Reading from the N-terminus, the 629-residue chain is MSPVSVISLPSDLCLPTSFIDRSGRELNPLHITIPNVAMRRQGKLMTRASMSVNLRTAVSDDAVIRRRGDFHSNLWDDDFIQSLSSHYGEPSYRERAERLIGEVKNSFNSVSNEDGESITPLDDLIQRLWMVDSVERLGIDRHFKKEIKSALDHVYSYWSEKGIGCGRESVVTDLNSTALGLRTLRLHGYDVSAEVLNHFKNQSGQFACTLKQTEDQIRTVLNLYRASLIAFPGEKVMDEAETFSAKYLKDALQKIPVSSLSREIGDVLEYGWHTYLPRLEARNYIDVFGQDTENSKSYMKTEKLLELAKLEFNIFHALQKRELEYLVRWWKGSGSPQMTFCRHRHVEYYTLASCIAFEPQHSGFRLGFAKACHIITVLDDMYDTFGTLDELELFTSAIKRWDPSATECLPEYMKGVYMIVYNTVNEMSQEADKAQGRDTLNYCRQAWEEYIDAYMQEAKWIASGEVPTFEEYYENGKVSSGHRVSALQPILTTDIPFPEHVLKEVDIPSKLNDLASAILRLRGDTRCYQADRARGEEASCISCYMKDNPGTTEEDALNHINAMISDVIKGLNWELLKPNSSVPISAKKHAFDISRAFHYGYKYRDGYSVASIETKSLVKRTVIDPVTL.

Residues 1–48 (MSPVSVISLPSDLCLPTSFIDRSGRELNPLHITIPNVAMRRQGKLMTR) constitute a chloroplast transit peptide. D380, D384, and D532 together coordinate Mg(2+). The DDXXD motif motif lies at 380 to 384 (DDMYD).

It belongs to the terpene synthase family. Tpsd subfamily. Mg(2+) serves as cofactor. The cofactor is Mn(2+).

It localises to the plastid. The protein localises to the chloroplast. The enzyme catalyses (2E)-geranyl diphosphate = (1S,5S)-alpha-pinene + diphosphate. It carries out the reaction (2E)-geranyl diphosphate = (1S,5S)-beta-pinene + diphosphate. Its pathway is terpene metabolism; oleoresin biosynthesis. It participates in secondary metabolite biosynthesis; terpenoid biosynthesis. Monoterpene synthase (TPS) involved in the biosynthesis of monoterpene natural products included in conifer oleoresin secretions and volatile emissions; these compounds contribute to biotic and abiotic stress defense against herbivores and pathogens. Catalyzes the conversion of (2E)-geranyl diphosphate (GPP) to (-)-alpha-pinene and, to a lower extent, to (-)-beta-pinene. This Pinus contorta (Shore pine) protein is (-)-alpha pinene synthase 1, chloroplastic.